Reading from the N-terminus, the 95-residue chain is Large ribosomal subunit protein bL27 (95 aa).

Residues Met-1 to Phe-10 constitute a propeptide that is removed on maturation.

The protein belongs to the bacterial ribosomal protein bL27 family. Post-translationally, the N-terminus is cleaved by ribosomal processing cysteine protease Prp.

This chain is Large ribosomal subunit protein bL27, found in Mesoplasma florum (strain ATCC 33453 / NBRC 100688 / NCTC 11704 / L1) (Acholeplasma florum).